The sequence spans 105 residues: Pyruvate synthase subunit PorD (105 aa).

2 consecutive 4Fe-4S ferredoxin-type domains span residues 44-73 and 74-103; these read FKPEFNRDKCVRCYLCYIYCPEPAIYLDEE and GYPVFDYDYCKGCGICANECPTKAIEMVRE. The [4Fe-4S] cluster site is built by C53, C56, C59, C63, C83, C86, C89, and C93.

Heterotetramer of one alpha, one beta, one delta and one gamma chain. The cofactor is [4Fe-4S] cluster.

The sequence is that of Pyruvate synthase subunit PorD (porD) from Pyrococcus furiosus (strain ATCC 43587 / DSM 3638 / JCM 8422 / Vc1).